A 375-amino-acid chain; its full sequence is Serpentine receptor class alpha-39 (375 aa).

The next 7 helical transmembrane spans lie at 17-37 (LFAI…LFII), 51-71 (LVFL…LTAW), 99-119 (IRGT…GILL), 138-158 (LGTI…FILL), 183-203 (VYVM…VHLV), 236-256 (TPLL…VSVF), and 275-295 (LFIM…ELWL).

This sequence belongs to the nematode receptor-like protein sra family.

The protein resides in the membrane. This Caenorhabditis elegans protein is Serpentine receptor class alpha-39 (sra-39).